We begin with the raw amino-acid sequence, 230 residues long: 7-cyano-7-deazaguanine synthase (230 aa).

9 to 19 (ISGGLDSTTCL) is an ATP binding site. Zn(2+) contacts are provided by cysteine 192, cysteine 202, cysteine 205, and cysteine 208.

This sequence belongs to the QueC family. It depends on Zn(2+) as a cofactor.

It catalyses the reaction 7-carboxy-7-deazaguanine + NH4(+) + ATP = 7-cyano-7-deazaguanine + ADP + phosphate + H2O + H(+). It participates in purine metabolism; 7-cyano-7-deazaguanine biosynthesis. In terms of biological role, catalyzes the ATP-dependent conversion of 7-carboxy-7-deazaguanine (CDG) to 7-cyano-7-deazaguanine (preQ(0)). This chain is 7-cyano-7-deazaguanine synthase, found in Myxococcus xanthus (strain DK1622).